The chain runs to 435 residues: Dual specificity mitogen-activated protein kinase kinase jkk-1 (435 aa).

Basic and acidic residues predominate over residues 35 to 49; that stretch reads RDRRSTSVDQKHKEC. The segment at 35 to 90 is disordered; it reads RDRRSTSVDQKHKECSSTSSSPQHQRPNNIGYLTSPMERKFTPLSMKPSPSRRDTE. The segment covering 50 to 66 has biased composition (polar residues); that stretch reads SSTSSSPQHQRPNNIGY. The Protein kinase domain occupies 122 to 385; sequence IHIISLLGSG…YRQLMKHDFY (264 aa). Residues 128-136 and Lys-149 contribute to the ATP site; that span reads LGSGSCGVV. The active-site Proton acceptor is Asp-246.

This sequence belongs to the protein kinase superfamily. STE Ser/Thr protein kinase family. MAP kinase kinase subfamily. As to quaternary structure, interacts with unc-16. Requires Mg(2+) as cofactor. As to expression, expressed in most neurons, including nerve ring, head ganglions, dorsal and ventral nerve cords and tail ganglions.

The protein localises to the cytoplasm. It localises to the perikaryon. The protein resides in the cell projection. Its subcellular location is the axon. The catalysed reaction is L-seryl-[protein] + ATP = O-phospho-L-seryl-[protein] + ADP + H(+). It catalyses the reaction L-threonyl-[protein] + ATP = O-phospho-L-threonyl-[protein] + ADP + H(+). The enzyme catalyses L-tyrosyl-[protein] + ATP = O-phospho-L-tyrosyl-[protein] + ADP + H(+). Functionally, dual specificity protein kinase which acts as an essential component of the JNK signal transduction pathway. May phosphorylate jnk-1. Plays a role in coordinating locomotion via D-type GABAergic motoneurons and in regulating synaptic vesicle transport downstream of adapter protein unc-16 and probably by activating jnk-1. Positively regulates lifespan. Upon environmental stress such as heat stress regulates daf-16 nuclear translocation probably by activating jnk-1. Regulates germline cell apoptosis in response to heavy metals such as Cu(2+) and to arsenite. In Caenorhabditis elegans, this protein is Dual specificity mitogen-activated protein kinase kinase jkk-1.